The primary structure comprises 499 residues: Probable cytosol aminopeptidase (499 aa).

Mn(2+) contacts are provided by lysine 263 and aspartate 268. Residue lysine 275 is part of the active site. Aspartate 286, aspartate 345, and glutamate 347 together coordinate Mn(2+). The active site involves arginine 349.

The protein belongs to the peptidase M17 family. It depends on Mn(2+) as a cofactor.

It is found in the cytoplasm. The enzyme catalyses Release of an N-terminal amino acid, Xaa-|-Yaa-, in which Xaa is preferably Leu, but may be other amino acids including Pro although not Arg or Lys, and Yaa may be Pro. Amino acid amides and methyl esters are also readily hydrolyzed, but rates on arylamides are exceedingly low.. It catalyses the reaction Release of an N-terminal amino acid, preferentially leucine, but not glutamic or aspartic acids.. Presumably involved in the processing and regular turnover of intracellular proteins. Catalyzes the removal of unsubstituted N-terminal amino acids from various peptides. In Chlamydia muridarum (strain MoPn / Nigg), this protein is Probable cytosol aminopeptidase (pepA).